We begin with the raw amino-acid sequence, 2531 residues long: Mediator of RNA polymerase II transcription subunit 12 (2531 aa).

Disordered stretches follow at residues 1-41 (MLSM…VKHG), 204-283 (QNHD…GSVM), 584-604 (VSRR…PKQD), and 742-762 (TTAT…THGF). A compositionally biased stretch (low complexity) spans 210–247 (SSNGTTSGSLTAAGNGPASNGSTGTSSINSVTGSSAST). The segment covering 586–604 (RRREEDQVEPRPPYEPKQD) has biased composition (basic and acidic residues). Position 745 is a phosphothreonine (T745). Residues S748 and S781 each carry the phosphoserine modification. Residues 748 to 757 (SPPPPAPPPT) are compositionally biased toward pro residues. The segment covering 796–805 (EKGQQHEAPD) has biased composition (basic and acidic residues). A disordered region spans residues 796-824 (EKGQQHEAPDSPKIGPPGDGETNPGGSIS). Residues S806 and S1356 each carry the phosphoserine modification. At T1360 the chain carries Phosphothreonine. Polar residues-rich tracts occupy residues 1585 to 1595 (VSKSDCNSSGS) and 1901 to 1910 (TPSSVDQSPS). 4 disordered regions span residues 1585–1608 (VSKS…CHSS), 1898–2092 (KADT…NQYA), 2114–2218 (QALS…GMAP), and 2469–2508 (MGGG…QQQT). The segment covering 1919 to 1933 (GRGKGTTTRKRKPKN) has biased composition (basic residues). 2 stretches are compositionally biased toward low complexity: residues 1938 to 2038 (PVVN…QQLN) and 2045 to 2055 (QPNPQMNFMQQ). The segment covering 2056 to 2066 (GPGGGGAGPQG) has biased composition (gly residues). 3 stretches are compositionally biased toward low complexity: residues 2067–2080 (MPGQ…APQQ), 2121–2132 (RQRQPFQQQAQQ), and 2139–2205 (NPMQ…QQQQ). Over residues 2469-2496 (MGGGAGGGMGAGPQQGGGAVGGGAGGGM) the composition is skewed to gly residues. The span at 2497–2507 (VPQQQSMNQQQ) shows a compositional bias: low complexity.

This sequence belongs to the Mediator complex subunit 12 family. Component of the Cdk8 module of the Mediator complex, composed of CycC, Cdk8, kto and skd.

The protein localises to the nucleus. Its function is as follows. Component of the Mediator complex, a coactivator involved in regulated gene transcription of nearly all RNA polymerase II-dependent genes. Mediator functions as a bridge to convey information from gene-specific regulatory proteins to the basal RNA polymerase II transcription machinery. Mediator is recruited to promoters by direct interactions with regulatory proteins and serves as a scaffold for the assembly of a functional preinitiation complex with RNA polymerase II and the general transcription factors. Required for leg and eye development and macrochaete specification or differentiation. The sequence is that of Mediator of RNA polymerase II transcription subunit 12 (kto) from Drosophila melanogaster (Fruit fly).